Consider the following 335-residue polypeptide: Histidinol-phosphatase (335 aa).

Belongs to the PHP hydrolase family. HisK subfamily.

The catalysed reaction is L-histidinol phosphate + H2O = L-histidinol + phosphate. It functions in the pathway amino-acid biosynthesis; L-histidine biosynthesis; L-histidine from 5-phospho-alpha-D-ribose 1-diphosphate: step 8/9. The sequence is that of Histidinol-phosphatase (HIS2) from Saccharomyces cerevisiae (strain ATCC 204508 / S288c) (Baker's yeast).